Consider the following 66-residue polypeptide: Pteroicidin-alpha (66 aa).

Positions 1-22 (MKCIALFLVLSMVVLMAEPGEA) are cleaved as a signal peptide. Position 43 is an arginine amide; partial (Arg-43). Positions 44-66 (GKNRDMAEQQELERAFDRERAFA) are excised as a propeptide.

It belongs to the pleurocidin family. Post-translationally, this peptide exists in N-terminally amidated and non-amidated forms. The amidated form is more active and has a greater alpha-helix content than the non-amidated form. Expressed in gill, skin, intestine, spleen, anterior kidney, and blood cells.

Its subcellular location is the secreted. In terms of biological role, the amidated peptide is bactericidal on human pathogens like S.aureus or E.coli, as well as on the fish pathogen A.salmonicida. May also be active against a variety of fungi. It can kill bacteria in less than 30 minutes (S.aureus) and 120 minutes (V.vulnificus). It induces hemolysis of erythrocytes from human and fishes (sea bass and lesser-spotted dogfish). The non-amidated peptide only inhibits growth of human pathogens like S.aureus or E.coli, and the fish pathogen A.salmonicida. Induces hemolysis of erythrocytes from human and fishes (sea bass and lesser-spotted dogfish). The protein is Pteroicidin-alpha of Pterois volitans (Red lionfish).